Consider the following 411-residue polypeptide: Lissencephaly-1 homolog (411 aa).

Positions 9–41 (QREELNQAIADYLGTNGYADSLEAFRKEADLST) constitute a LisH domain. Residues 56–83 (TSVIRLQKKVMELEAKLTEAEKEVIEGA) are a coiled coil. WD repeat units follow at residues 106–147 (GHRA…RTLK), 148–187 (GHTD…ECVK), 191–230 (GHDH…CVKT), 233–272 (GHRE…CKVE), 275–334 (DHEH…CLLT), 337–376 (GHDN…CMKT), and 379–411 (AHQH…WECR).

Belongs to the WD repeat LIS1/nudF family.

It localises to the cytoplasm. It is found in the cytoskeleton. The protein localises to the microtubule organizing center. Its subcellular location is the centrosome. Functionally, positively regulates the activity of the minus-end directed microtubule motor protein dynein. May enhance dynein-mediated microtubule sliding by targeting dynein to the microtubule plus end. Required for several dynein- and microtubule-dependent processes. This chain is Lissencephaly-1 homolog, found in Drosophila grimshawi (Hawaiian fruit fly).